The chain runs to 231 residues: Killer cell lectin-like receptor subfamily F member 1 (231 aa).

Topologically, residues 1-38 are cytoplasmic; it reads MQDEERYMTLNVQSKKRTSTQTTQLTFKDYSVVLHWYK. At Tyr-7 the chain carries Phosphotyrosine. The helical; Signal-anchor for type II membrane protein transmembrane segment at 39-59 threads the bilayer; sequence ILLGISGTLNGILALALISLI. Residues 60–231 lie on the Extracellular side of the membrane; that stretch reads LLVSQGVLLK…SSVFKWICQY (172 aa). N-linked (GlcNAc...) asparagine glycosylation is found at Asn-77, Asn-91, Asn-96, and Asn-176. Residues 121–230 form the C-type lectin domain; that stretch reads YRGKCYWFSN…CSSVFKWICQ (110 aa). 2 disulfides stabilise this stretch: Cys-142-Cys-229 and Cys-208-Cys-221.

Homodimer. Interacts with CLEC2B. Post-translationally, phosphorylated on Tyr-7; this phosphorylation is required for NKp80/KLRF1-mediated cytotoxicity.

The protein localises to the membrane. In terms of biological role, functions as an activating receptor involved in immunosurveillance upon binding to various ligands displayed at the surface of myeloid cells. Upon interaction with CLEC2B ligand, stimulates NK-cell cytotoxicity and cytokine production leading to the cytolysis of malignant CLEC2B-expressing myeloid cells. Actviation of the common cytotoxicity pathway involves SRC and SYK kinases. The protein is Killer cell lectin-like receptor subfamily F member 1 (KLRF1) of Macaca fascicularis (Crab-eating macaque).